The chain runs to 883 residues: Puromycin-sensitive aminopeptidase (883 aa).

Residues glutamate 125 and 265–269 (GAMEN) each bind substrate. Position 301 (histidine 301) interacts with Zn(2+). The Proton acceptor role is filled by glutamate 302. Histidine 305 and glutamate 324 together coordinate Zn(2+).

This sequence belongs to the peptidase M1 family. The cofactor is Zn(2+).

It carries out the reaction Release of an N-terminal amino acid, preferentially alanine, from a wide range of peptides, amides and arylamides.. Strongly inhibited by puromycin and DAMPAQ-22. Aminopeptidase with broad substrate specificity for several peptides. Involved in proteolytic events essential for cell growth and viability. Plays an essential role during prophase I of meiosis. Required for correct meiotic reconbination in both male and female gametophytes. This Arabidopsis thaliana (Mouse-ear cress) protein is Puromycin-sensitive aminopeptidase (MPA1).